The sequence spans 205 residues: Ribonuclease HII (205 aa).

One can recognise an RNase H type-2 domain in the interval 16–205 (VSEVGIDEVG…KSFLKKSNLF (190 aa)). Positions 22, 23, and 118 each coordinate a divalent metal cation.

This sequence belongs to the RNase HII family. It depends on Mn(2+) as a cofactor. Mg(2+) serves as cofactor.

The protein localises to the cytoplasm. The catalysed reaction is Endonucleolytic cleavage to 5'-phosphomonoester.. Its function is as follows. Endonuclease that specifically degrades the RNA of RNA-DNA hybrids. In Prochlorococcus marinus (strain MIT 9215), this protein is Ribonuclease HII.